The primary structure comprises 281 residues: Aliphatic sulfonates import ATP-binding protein SsuB (281 aa).

The 224-residue stretch at 40-263 (LTLRNLRKSF…RRGSADLAAL (224 aa)) folds into the ABC transporter domain. 72–79 (GRSGCGKS) provides a ligand contact to ATP.

The protein belongs to the ABC transporter superfamily. Aliphatic sulfonates importer (TC 3.A.1.17.2) family. In terms of assembly, the complex is composed of two ATP-binding proteins (SsuB), two transmembrane proteins (SsuC) and a solute-binding protein (SsuA).

The protein localises to the cell inner membrane. The enzyme catalyses ATP + H2O + aliphatic sulfonate-[sulfonate-binding protein]Side 1 = ADP + phosphate + aliphatic sulfonateSide 2 + [sulfonate-binding protein]Side 1.. Part of the ABC transporter complex SsuABC involved in aliphatic sulfonates import. Responsible for energy coupling to the transport system. The polypeptide is Aliphatic sulfonates import ATP-binding protein SsuB (Rhodopseudomonas palustris (strain BisA53)).